The sequence spans 466 residues: Glucose-6-phosphate 1-dehydrogenase 1 (466 aa).

Residues S48, 88-89, and K141 each bind NADP(+); that span reads DV. H171, K175, E209, and D228 together coordinate substrate. H233 functions as the Proton acceptor in the catalytic mechanism. Residues K319 and K324 each coordinate substrate.

It belongs to the glucose-6-phosphate dehydrogenase family.

It catalyses the reaction D-glucose 6-phosphate + NADP(+) = 6-phospho-D-glucono-1,5-lactone + NADPH + H(+). It functions in the pathway carbohydrate degradation; pentose phosphate pathway; D-ribulose 5-phosphate from D-glucose 6-phosphate (oxidative stage): step 1/3. In terms of biological role, catalyzes the oxidation of glucose 6-phosphate to 6-phosphogluconolactone. The chain is Glucose-6-phosphate 1-dehydrogenase 1 from Mycobacterium tuberculosis (strain CDC 1551 / Oshkosh).